The chain runs to 152 residues: Aspartate-rich protein (152 aa).

Residues 1–19 form the signal peptide; it reads MQKLLLAVLFFSLLAVATA. Basic and acidic residues predominate over residues 82-113; it reads ATPKTEAEPGSLDKGEGTKGEKGKEGKKEKGE. The interval 82 to 152 is disordered; sequence ATPKTEAEPG…VHENDDENED (71 aa). Over residues 135–152 the composition is skewed to acidic residues; it reads DDDDDRDDVHENDDENED.

In terms of tissue distribution, prismatic layer of shell (at protein level). Expressed primarily in the mantle with highest level in the mantle edge and lower level in the mantle pallium.

It localises to the secreted. In Margaritifera margaritifera (Freshwater pearl mussel), this protein is Aspartate-rich protein.